A 463-amino-acid polypeptide reads, in one-letter code: Glutamate--tRNA ligase 2 (463 aa).

Residues 11–21 (PSPTGYLHIGG) carry the 'HIGH' region motif. The short motif at 240 to 244 (KLSKR) is the 'KMSKS' region element. An ATP-binding site is contributed by lysine 243.

This sequence belongs to the class-I aminoacyl-tRNA synthetase family. Glutamate--tRNA ligase type 1 subfamily. Monomer.

It localises to the cytoplasm. The catalysed reaction is tRNA(Glu) + L-glutamate + ATP = L-glutamyl-tRNA(Glu) + AMP + diphosphate. Its function is as follows. Catalyzes the attachment of glutamate to tRNA(Glu) in a two-step reaction: glutamate is first activated by ATP to form Glu-AMP and then transferred to the acceptor end of tRNA(Glu). The polypeptide is Glutamate--tRNA ligase 2 (Campylobacter jejuni (strain RM1221)).